The chain runs to 397 residues: Elongation factor Tu (397 aa).

The tr-type G domain maps to 10 to 207 (KPHVNIGTIG…ACDSYIPEPQ (198 aa)). The interval 19–26 (GHIDHGKT) is G1. 19 to 26 (GHIDHGKT) provides a ligand contact to GTP. Thr-26 lines the Mg(2+) pocket. Residues 60 to 64 (GITIA) are G2. The tract at residues 81 to 84 (DCPG) is G3. GTP contacts are provided by residues 81–85 (DCPGH) and 136–139 (NKCD). Positions 136-139 (NKCD) are G4. The tract at residues 174–176 (SAL) is G5.

Belongs to the TRAFAC class translation factor GTPase superfamily. Classic translation factor GTPase family. EF-Tu/EF-1A subfamily. Monomer.

Its subcellular location is the cytoplasm. The catalysed reaction is GTP + H2O = GDP + phosphate + H(+). Its function is as follows. GTP hydrolase that promotes the GTP-dependent binding of aminoacyl-tRNA to the A-site of ribosomes during protein biosynthesis. This is Elongation factor Tu from Nitratidesulfovibrio vulgaris (strain ATCC 29579 / DSM 644 / CCUG 34227 / NCIMB 8303 / VKM B-1760 / Hildenborough) (Desulfovibrio vulgaris).